We begin with the raw amino-acid sequence, 431 residues long: Phosphoribosylamine--glycine ligase (431 aa).

The 208-residue stretch at 109-316 folds into the ATP-grasp domain; it reads KDFLARHGIP…LVDLLEAAID (208 aa). 135–196 contributes to the ATP binding site; that stretch reads VREKGTPIVV…EEFLDGEEAS (62 aa). Mg(2+) contacts are provided by Glu-286 and Asn-288.

It belongs to the GARS family. The cofactor is Mg(2+). Requires Mn(2+) as cofactor.

The catalysed reaction is 5-phospho-beta-D-ribosylamine + glycine + ATP = N(1)-(5-phospho-beta-D-ribosyl)glycinamide + ADP + phosphate + H(+). It participates in purine metabolism; IMP biosynthesis via de novo pathway; N(1)-(5-phospho-D-ribosyl)glycinamide from 5-phospho-alpha-D-ribose 1-diphosphate: step 2/2. This Xanthomonas axonopodis pv. citri (strain 306) protein is Phosphoribosylamine--glycine ligase.